The sequence spans 426 residues: MPPKKQAQAGGSKKAEQKKKEKIIEDKTFGLKNKKGAKQQKFIKAVTHQVKFGQQNPRQVAQSEAEKKLKKDDKKKELQELNELFKPVVAAQKISKGADPKSVVCAFFKQGQCTKGDKCKFSHDLTLERKCEKRSVYIDARDEELEKDTMDNWDEKKLEEVVNKKHGEAEKKKPKTQIVCKHFLEAIENNKYGWFWVCPGGGDICMYRHALPPGFVLKKDKKKEEKEDEISLEDLIERERSALGPNVTKITLESFLAWKKRKRQEKIDKLEQDMERRKADFKAGKALVISGREVFEFRPELVNDDDEEADDTRYTQGTGGDEVDDSVSVNDIDLSLYIPRDVDETGITVASLERFSTYTSDKDENKLSEASGGRAENGERSDLEEDNEREGTENGAIDAVPVDENLFTGEDLDELEEELNTLDLEE.

A compositionally biased stretch (low complexity) spans 1–12 (MPPKKQAQAGGS). Disordered stretches follow at residues 1-30 (MPPKKQAQAGGSKKAEQKKKEKIIEDKTFG) and 53-74 (GQQNPRQVAQSEAEKKLKKDDK). Over residues 13-29 (KKAEQKKKEKIIEDKTF) the composition is skewed to basic and acidic residues. Polar residues predominate over residues 53–62 (GQQNPRQVAQ). A coiled-coil region spans residues 61–86 (AQSEAEKKLKKDDKKKELQELNELFK). A compositionally biased stretch (basic and acidic residues) spans 64 to 74 (EAEKKLKKDDK). 2 C3H1-type zinc fingers span residues 99–126 (DPKSVVCAFFKQGQCTKGDKCKFSHDLT) and 174–212 (PKTQIVCKHFLEAIENNKYGWFWVCPGGGDICMYRHALP). Positions 218–285 (KKDKKKEEKE…RRKADFKAGK (68 aa)) form a coiled coil. Ser231 carries the phosphoserine modification. The interval 236–260 (IERERSALGPNVTKITLESFLAWKK) is required for interaction with DRG1. Residues 299–326 (PELVNDDDEEADDTRYTQGTGGDEVDDS) are disordered. Phosphoserine occurs at positions 351, 360, and 381. The interval 358-411 (YTSDKDENKLSEASGGRAENGERSDLEEDNEREGTENGAIDAVPVDENLFTGED) is disordered.

This sequence belongs to the ZC3H15/TMA46 family. Interacts with DRG1; this interaction prevents DRG1 poly-ubiquitination and degradation by proteasome. DRG1-ZC3H15/DFRP1 complex co-sediments with polysomes. Associates with microtubules.

The protein localises to the cytoplasm. Its subcellular location is the nucleus. Protects DRG1 from proteolytic degradation. Stimulates DRG1 GTPase activity likely by increasing the affinity for the potassium ions. The protein is Zinc finger CCCH domain-containing protein 15 (ZC3H15) of Homo sapiens (Human).